A 360-amino-acid chain; its full sequence is Nicotinate-nucleotide--dimethylbenzimidazole phosphoribosyltransferase (360 aa).

The active-site Proton acceptor is the glutamate 327.

Belongs to the CobT family.

The enzyme catalyses 5,6-dimethylbenzimidazole + nicotinate beta-D-ribonucleotide = alpha-ribazole 5'-phosphate + nicotinate + H(+). The protein operates within nucleoside biosynthesis; alpha-ribazole biosynthesis; alpha-ribazole from 5,6-dimethylbenzimidazole: step 1/2. Functionally, catalyzes the synthesis of alpha-ribazole-5'-phosphate from nicotinate mononucleotide (NAMN) and 5,6-dimethylbenzimidazole (DMB). The sequence is that of Nicotinate-nucleotide--dimethylbenzimidazole phosphoribosyltransferase from Shewanella baltica (strain OS223).